A 206-amino-acid polypeptide reads, in one-letter code: Large ribosomal subunit protein eL13x (206 aa).

Positions Asn-186 to Lys-206 are disordered. Residues Arg-196–Lys-206 are compositionally biased toward basic and acidic residues.

Belongs to the eukaryotic ribosomal protein eL13 family.

This chain is Large ribosomal subunit protein eL13x (RPL13D), found in Arabidopsis thaliana (Mouse-ear cress).